We begin with the raw amino-acid sequence, 509 residues long: Cytochrome P450 monooxygenase CYP512U6 (509 aa).

The helical transmembrane segment at 12-29 (VFACVAVVIAIYAVRWYT) threads the bilayer. Cys446 is a binding site for heme.

This sequence belongs to the cytochrome P450 family. The cofactor is heme.

Its subcellular location is the membrane. It catalyses the reaction ganoderate DM + reduced [NADPH--hemoprotein reductase] + O2 = hainanate A + oxidized [NADPH--hemoprotein reductase] + H2O + H(+). The catalysed reaction is ganoderate TR + reduced [NADPH--hemoprotein reductase] + O2 = ganoderate Jc + oxidized [NADPH--hemoprotein reductase] + H2O + H(+). The protein operates within secondary metabolite biosynthesis; terpenoid biosynthesis. Its function is as follows. Cytochrome P450 monooxygenase that hydroxylates the ganoderic acids DM and TR at the C-23 position to produce hainanic acid A and ganoderic acid Jc, respectively. This is Cytochrome P450 monooxygenase CYP512U6 from Ganoderma lucidum (Ling zhi medicinal fungus).